Here is a 975-residue protein sequence, read N- to C-terminus: Protein spalten (975 aa).

2 disordered regions span residues 1 to 31 (MKKM…QLAQ) and 64 to 99 (NLAQ…SNNN). The span at 8 to 17 (NKKEKKEEQS) shows a compositional bias: basic and acidic residues. Positions 21-70 (SSLAQQHQLAQQQYQLQQQQLQLQYQQHQQQLQLAQQQKQNEQNLAQLST) form a coiled coil. The 345-residue stretch at 114–458 (FCGTIMILGH…DAEKRGFTTP (345 aa)) folds into the G-alpha domain. The segment at 117–130 (TIMILGHTESGKTT) is G1 motif. GTP contacts are provided by residues 122-129 (GHTESGKT), 261-267 (ISAYDQK), 286-290 (GCSGK), and 373-376 (NTSD). Positions 259 to 267 (DIISAYDQK) are G2 motif. The segment at 282-291 (VDLFGCSGKQ) is G3 motif. The segment at 369 to 376 (YLIFNTSD) is G4 motif. The G5 motif stretch occupies residues 427-432 (VNLLDK). 2 disordered regions span residues 455-520 (FTTP…GSST) and 541-700 (DNDS…VGSK). Composition is skewed to low complexity over residues 460–478 (NQSN…SRNS), 500–515 (LKNV…NTTT), and 544–587 (SSYS…NNAT). Over residues 595-688 (PPKEPKPVKP…DGAAESKKNG (94 aa)) the composition is skewed to basic and acidic residues. Positions 704–972 (ESGFGSLQGR…DNITVLVVIL (269 aa)) constitute a PPM-type phosphatase domain. Residues D749, G750, D920, and D963 each contribute to the Mn(2+) site.

It in the N-terminal section; belongs to the G-alpha family. This sequence in the C-terminal section; belongs to the PP2C family. In terms of assembly, g proteins are composed of 3 units; alpha, beta and gamma. The alpha chain contains the guanine nucleotide binding site. Mg(2+) is required as a cofactor. The cofactor is Mn(2+).

The protein resides in the cytoplasm. It localises to the cytosol. Its subcellular location is the cell membrane. The catalysed reaction is O-phospho-L-seryl-[protein] + H2O = L-seryl-[protein] + phosphate. It carries out the reaction O-phospho-L-threonyl-[protein] + H2O = L-threonyl-[protein] + phosphate. Inhibited by 50 mM NaF (sodium fluoride). Its function is as follows. Involved in cell-type differentiation and morphogenesis. Dephosphorylates casein; in vitro. May also be involved as modulators or transducers in various transmembrane signaling systems. The polypeptide is Protein spalten (spnA) (Dictyostelium discoideum (Social amoeba)).